A 185-amino-acid chain; its full sequence is Protein E3 homolog (185 aa).

The region spanning 7–73 (TVNDAEIFSL…SNPPKWFKNY (67 aa)) is the Z-binding domain. Residues 112-179 (NPCIVLNEYC…SKITMDEILD (68 aa)) form the DRBM domain.

The protein belongs to the poxviridae E3 protein family.

In terms of biological role, RNA-binding protein that plays a role in the inhibition of multiple cellular antiviral responses activated by double-stranded RNA (dsRNA), such as inhibition of PKR activation, necroptosis, and IFN-mediated antiviral activities. Recognizes and binds Z-RNA structures via its Z-binding domain and dsRNA via its DRBM domain: RNA-binding activity is required to escape host ZBP1-dependent necroptosis. Mechanistically, the Z-binding domain binds Z-RNAs that are produced during Yaba-like disease virus infection, thereby competing with Z-RNA detection by host ZBP1, suppressing ZBP1-dependent necroptosis. The polypeptide is Protein E3 homolog (Yaba-like disease virus (YLDV)).